Consider the following 765-residue polypeptide: Probable glycosyltransferase STELLO2 (765 aa).

Over 1–43 the chain is Cytoplasmic; the sequence is MLVQDRVAPKPPKSRIRELPSRDRFAEPKILDFSSWVSDNVYR. Residues 44–64 traverse the membrane as a helical segment; sequence IVIIFLFIVTVAAFFFLYNTT. At 65–765 the chain is on the lumenal side; the sequence is DTASLLCFQS…EGDPLLMELV (701 aa). Asparagine 235 and asparagine 723 each carry an N-linked (GlcNAc...) asparagine glycan.

It belongs to the STELLO family. Homo- and heterodimer with STL1. Interacts with CESA1, CESA3, CESA4, CESA6, CESA7 and CESA8, but not with GOT1. Expressed in cells that are expanding or producing secondary cell walls.

The protein resides in the golgi apparatus membrane. Probable glycosyltransferase regulating the assembly and trafficking of cellulose synthase complexes. The protein is Probable glycosyltransferase STELLO2 of Arabidopsis thaliana (Mouse-ear cress).